The sequence spans 228 residues: Nucleolar protein 12 (228 aa).

A disordered region spans residues 1–22 (MGKSDRLQQGSKGKGGGKRKHG). Residues 40 to 103 (FHKRKLERRR…AITATTECVQ (64 aa)) are a coiled coil. Over residues 126 to 145 (LLEPAQRDGGDGEERERTEA) the composition is skewed to basic and acidic residues. A disordered region spans residues 126-228 (LLEPAQRDGG…QTGRNERSQD (103 aa)). Over residues 158–170 (KIQSLTASLNSLV) the composition is skewed to polar residues. Positions 171 to 180 (KQKKRRKQKR) are enriched in basic residues. Residues 181–195 (RQEAKQRSHQSDRKS) are compositionally biased toward basic and acidic residues. Residues 204 to 220 (NKQKQGKSTKRQRRRQT) show a composition bias toward basic residues.

The protein belongs to the RRP17 family.

The protein localises to the nucleus. It is found in the nucleolus. In terms of biological role, may bind to rRNA. The protein is Nucleolar protein 12 (nol12) of Danio rerio (Zebrafish).